The sequence spans 90 residues: Small ribosomal subunit protein bS16 (90 aa).

The protein belongs to the bacterial ribosomal protein bS16 family.

The chain is Small ribosomal subunit protein bS16 from Geobacillus thermodenitrificans (strain NG80-2).